The primary structure comprises 230 residues: Cytochrome c oxidase subunit 2 (230 aa).

Residues 1 to 14 are Mitochondrial intermembrane-facing; it reads MAHPSQLGFQDAAS. A helical transmembrane segment spans residues 15-45; the sequence is PVMEELLHFHDHALMIVLLISTLVLYIIVAM. Residues 46 to 59 are Mitochondrial matrix-facing; the sequence is VSTKLTNKYILDSQ. The chain crosses the membrane as a helical span at residues 60 to 87; it reads EIEIVWTVLPAVILILIALPSLRILYLM. Residues 88 to 230 lie on the Mitochondrial intermembrane side of the membrane; it reads DEINDPHLTI…KWSTMMLEDA (143 aa). Positions 161, 196, 198, 200, 204, and 207 each coordinate Cu cation. E198 contacts Mg(2+).

This sequence belongs to the cytochrome c oxidase subunit 2 family. As to quaternary structure, component of the cytochrome c oxidase (complex IV, CIV), a multisubunit enzyme composed of 14 subunits. The complex is composed of a catalytic core of 3 subunits MT-CO1, MT-CO2 and MT-CO3, encoded in the mitochondrial DNA, and 11 supernumerary subunits COX4I, COX5A, COX5B, COX6A, COX6B, COX6C, COX7A, COX7B, COX7C, COX8 and NDUFA4, which are encoded in the nuclear genome. The complex exists as a monomer or a dimer and forms supercomplexes (SCs) in the inner mitochondrial membrane with NADH-ubiquinone oxidoreductase (complex I, CI) and ubiquinol-cytochrome c oxidoreductase (cytochrome b-c1 complex, complex III, CIII), resulting in different assemblies (supercomplex SCI(1)III(2)IV(1) and megacomplex MCI(2)III(2)IV(2)). Found in a complex with TMEM177, COA6, COX18, COX20, SCO1 and SCO2. Interacts with TMEM177 in a COX20-dependent manner. Interacts with COX20. Interacts with COX16. Requires Cu cation as cofactor.

It localises to the mitochondrion inner membrane. The enzyme catalyses 4 Fe(II)-[cytochrome c] + O2 + 8 H(+)(in) = 4 Fe(III)-[cytochrome c] + 2 H2O + 4 H(+)(out). In terms of biological role, component of the cytochrome c oxidase, the last enzyme in the mitochondrial electron transport chain which drives oxidative phosphorylation. The respiratory chain contains 3 multisubunit complexes succinate dehydrogenase (complex II, CII), ubiquinol-cytochrome c oxidoreductase (cytochrome b-c1 complex, complex III, CIII) and cytochrome c oxidase (complex IV, CIV), that cooperate to transfer electrons derived from NADH and succinate to molecular oxygen, creating an electrochemical gradient over the inner membrane that drives transmembrane transport and the ATP synthase. Cytochrome c oxidase is the component of the respiratory chain that catalyzes the reduction of oxygen to water. Electrons originating from reduced cytochrome c in the intermembrane space (IMS) are transferred via the dinuclear copper A center (CU(A)) of subunit 2 and heme A of subunit 1 to the active site in subunit 1, a binuclear center (BNC) formed by heme A3 and copper B (CU(B)). The BNC reduces molecular oxygen to 2 water molecules using 4 electrons from cytochrome c in the IMS and 4 protons from the mitochondrial matrix. In Salmo salar (Atlantic salmon), this protein is Cytochrome c oxidase subunit 2 (mt-co2).